Reading from the N-terminus, the 173-residue chain is Peptide methionine sulfoxide reductase MsrA (173 aa).

Residue C10 is part of the active site.

Belongs to the MsrA Met sulfoxide reductase family.

The enzyme catalyses L-methionyl-[protein] + [thioredoxin]-disulfide + H2O = L-methionyl-(S)-S-oxide-[protein] + [thioredoxin]-dithiol. It catalyses the reaction [thioredoxin]-disulfide + L-methionine + H2O = L-methionine (S)-S-oxide + [thioredoxin]-dithiol. Its function is as follows. Has an important function as a repair enzyme for proteins that have been inactivated by oxidation. Catalyzes the reversible oxidation-reduction of methionine sulfoxide in proteins to methionine. This Psychrobacter arcticus (strain DSM 17307 / VKM B-2377 / 273-4) protein is Peptide methionine sulfoxide reductase MsrA.